A 158-amino-acid chain; its full sequence is 6,7-dimethyl-8-ribityllumazine synthase (158 aa).

Residues Phe22, 57 to 59 (AVE), and 81 to 83 (AVI) contribute to the 5-amino-6-(D-ribitylamino)uracil site. 86–87 (GT) is a (2S)-2-hydroxy-3-oxobutyl phosphate binding site. The Proton donor role is filled by His89. Position 114 (Phe114) interacts with 5-amino-6-(D-ribitylamino)uracil. Arg128 contacts (2S)-2-hydroxy-3-oxobutyl phosphate.

It belongs to the DMRL synthase family. In terms of assembly, forms an icosahedral capsid composed of 60 subunits, arranged as a dodecamer of pentamers.

It carries out the reaction (2S)-2-hydroxy-3-oxobutyl phosphate + 5-amino-6-(D-ribitylamino)uracil = 6,7-dimethyl-8-(1-D-ribityl)lumazine + phosphate + 2 H2O + H(+). The protein operates within cofactor biosynthesis; riboflavin biosynthesis; riboflavin from 2-hydroxy-3-oxobutyl phosphate and 5-amino-6-(D-ribitylamino)uracil: step 1/2. Its function is as follows. Catalyzes the formation of 6,7-dimethyl-8-ribityllumazine by condensation of 5-amino-6-(D-ribitylamino)uracil with 3,4-dihydroxy-2-butanone 4-phosphate. This is the penultimate step in the biosynthesis of riboflavin. This Shewanella oneidensis (strain ATCC 700550 / JCM 31522 / CIP 106686 / LMG 19005 / NCIMB 14063 / MR-1) protein is 6,7-dimethyl-8-ribityllumazine synthase.